A 192-amino-acid polypeptide reads, in one-letter code: MGSAVLLRDDFDGAALRQLARQTKDANQARRLLALAAIYDGGPRSDAARIGSVTLQIVRDWVLRFNARGPDGLVNGKAPGGRAKLNAAQRQALAKVVESGPIPAIHGVVRWRRKDLVQWIFQEFRISMDETTVGRELKALGFAKLSARPRHYAQNELEVDAFKKTSPPLWRKSEAGSRKARTSNSGGPTKRA.

Residues 168–192 (PLWRKSEAGSRKARTSNSGGPTKRA) are disordered. Over residues 182 to 192 (TSNSGGPTKRA) the composition is skewed to polar residues.

It to A.xylinum IS1268 ORFA.

This is an uncharacterized protein from Sinorhizobium fredii (strain NBRC 101917 / NGR234).